The sequence spans 480 residues: Glutamyl-tRNA(Gln) amidotransferase subunit A (480 aa).

Catalysis depends on charge relay system residues lysine 74 and serine 149. Catalysis depends on serine 173, which acts as the Acyl-ester intermediate.

This sequence belongs to the amidase family. GatA subfamily. Heterotrimer of A, B and C subunits.

It catalyses the reaction L-glutamyl-tRNA(Gln) + L-glutamine + ATP + H2O = L-glutaminyl-tRNA(Gln) + L-glutamate + ADP + phosphate + H(+). Functionally, allows the formation of correctly charged Gln-tRNA(Gln) through the transamidation of misacylated Glu-tRNA(Gln) in organisms which lack glutaminyl-tRNA synthetase. The reaction takes place in the presence of glutamine and ATP through an activated gamma-phospho-Glu-tRNA(Gln). The polypeptide is Glutamyl-tRNA(Gln) amidotransferase subunit A (Ruthia magnifica subsp. Calyptogena magnifica).